The chain runs to 554 residues: MTPLIFVTGGVVSSLGKGIAAASLASILEARGLKVTMMKLDPYINVDPGTMSPFQHGEVYVTDDGAETDLDLGHYERYVRTRLSRKNSVTTGRIYENVIRKERRGDYLGATVQVIPHITDEIRRCIDEATAGFDVALIEIGGTVGDIESLPFLEAIRQVRTERGAEKAMFMHLTLVPYIAAAGELKTKPTQHSVKELRSIGIQPDVLLCRSEQAVPDSERRKIALFTNVSERAVISCPDIDVLYGMPLELLRQGLDELVIEQFKLRDKVAAADLSEWAAVVDAVKHPLDEVNIAVVGKYVDHQDAYKSVAEALRHGGLRQRTKVNLKWLEAQDLEGSDMSALQDIDGILVPGGFGDRGFEGKVQTSKFAREHKVPYFGICYGMQAAVVDYARHVADLDAANSTENDRQSPHPVIGLITEWRTATGEVEKRDEKSDLGGTMRLGLQEQRLKPGTLAREVYGKDVVAERHRHRYEFNNRYRTQLEDAGLVISGKSMDDTLVEVVELPRDMHPWFLACQAHPEFLSTPRDGHPLFIGFVRAAREKKAGGKLLKEARA.

Residues 1–265 (MTPLIFVTGG…DELVIEQFKL (265 aa)) are amidoligase domain. A CTP-binding site is contributed by S13. A UTP-binding site is contributed by S13. ATP is bound by residues 14–19 (SLGKGI) and D71. 2 residues coordinate Mg(2+): D71 and E139. CTP contacts are provided by residues 146-148 (DIE), 186-191 (KTKPTQ), and K222. UTP is bound by residues 186-191 (KTKPTQ) and K222. Residues 292–545 (NIAVVGKYVD…VRAAREKKAG (254 aa)) enclose the Glutamine amidotransferase type-1 domain. G353 serves as a coordination point for L-glutamine. Catalysis depends on C380, which acts as the Nucleophile; for glutamine hydrolysis. L-glutamine is bound by residues 381–384 (YGMQ), E404, and R471. Catalysis depends on residues H518 and E520.

The protein belongs to the CTP synthase family. Homotetramer.

The catalysed reaction is UTP + L-glutamine + ATP + H2O = CTP + L-glutamate + ADP + phosphate + 2 H(+). It catalyses the reaction L-glutamine + H2O = L-glutamate + NH4(+). The enzyme catalyses UTP + NH4(+) + ATP = CTP + ADP + phosphate + 2 H(+). It functions in the pathway pyrimidine metabolism; CTP biosynthesis via de novo pathway; CTP from UDP: step 2/2. Its activity is regulated as follows. Allosterically activated by GTP, when glutamine is the substrate; GTP has no effect on the reaction when ammonia is the substrate. The allosteric effector GTP functions by stabilizing the protein conformation that binds the tetrahedral intermediate(s) formed during glutamine hydrolysis. Inhibited by the product CTP, via allosteric rather than competitive inhibition. Catalyzes the ATP-dependent amination of UTP to CTP with either L-glutamine or ammonia as the source of nitrogen. Regulates intracellular CTP levels through interactions with the four ribonucleotide triphosphates. This is CTP synthase from Xanthomonas euvesicatoria pv. vesicatoria (strain 85-10) (Xanthomonas campestris pv. vesicatoria).